We begin with the raw amino-acid sequence, 266 residues long: E3 ubiquitin-protein ligase RNF170 (266 aa).

At 1–26 (MEGSVCVDGAAAPAPDEASLIEGVSN) the chain is on the lumenal side. Residues 27–47 (AVLLVLVLSVTLLAGLTTLLC) traverse the membrane as a helical segment. At 48 to 209 (RSEQQRIHPE…GGLFWMFRVR (162 aa)) the chain is on the cytoplasmic side. An RING-type zinc finger spans residues 88–131 (CPVCLQQAVLPVETNCGHLFCGSCIIAYWRYGTWLGAISCPICR). A helical membrane pass occupies residues 210-230 (ILLCVCGALAYLVSPLDFLPE). Position 231 (glycine 231) is a topological domain, lumenal. Residues 232-252 (VLGLLGFLDDFFVILLLFIYI) form a helical membrane-spanning segment. Residues 253–266 (SIMYREVVTQRLAG) lie on the Cytoplasmic side of the membrane.

As to expression, highly expressed in the developing brain, and less within intersomitic structures of the trunk.

Its subcellular location is the endoplasmic reticulum membrane. The enzyme catalyses S-ubiquitinyl-[E2 ubiquitin-conjugating enzyme]-L-cysteine + [acceptor protein]-L-lysine = [E2 ubiquitin-conjugating enzyme]-L-cysteine + N(6)-ubiquitinyl-[acceptor protein]-L-lysine.. It participates in protein modification; protein ubiquitination. Functionally, E3 ubiquitin-protein ligase that plays an essential role in stimulus-induced inositol 1,4,5-trisphosphate receptor (ITPR) ubiquitination and degradation via the endoplasmic reticulum-associated degradation (ERAD) pathway. Also involved in ITPR turnover in resting cells. The protein is E3 ubiquitin-protein ligase RNF170 (rnf170) of Danio rerio (Zebrafish).